The primary structure comprises 257 residues: Imidazole glycerol phosphate synthase subunit HisF (257 aa).

Residues D12 and D131 contribute to the active site.

This sequence belongs to the HisA/HisF family. As to quaternary structure, heterodimer of HisH and HisF.

The protein resides in the cytoplasm. It catalyses the reaction 5-[(5-phospho-1-deoxy-D-ribulos-1-ylimino)methylamino]-1-(5-phospho-beta-D-ribosyl)imidazole-4-carboxamide + L-glutamine = D-erythro-1-(imidazol-4-yl)glycerol 3-phosphate + 5-amino-1-(5-phospho-beta-D-ribosyl)imidazole-4-carboxamide + L-glutamate + H(+). It functions in the pathway amino-acid biosynthesis; L-histidine biosynthesis; L-histidine from 5-phospho-alpha-D-ribose 1-diphosphate: step 5/9. Functionally, IGPS catalyzes the conversion of PRFAR and glutamine to IGP, AICAR and glutamate. The HisF subunit catalyzes the cyclization activity that produces IGP and AICAR from PRFAR using the ammonia provided by the HisH subunit. The polypeptide is Imidazole glycerol phosphate synthase subunit HisF (Cellvibrio japonicus (strain Ueda107) (Pseudomonas fluorescens subsp. cellulosa)).